Reading from the N-terminus, the 253-residue chain is Protein PET20, mitochondrial (253 aa).

Residues 1–36 (MLKLARPFIPPLSRNNAISSGIVLTSRRFQSSFTFL) constitute a mitochondrion transit peptide. Positions 44–93 (KNQMKSKRKKGSKKAAYHRQPPEHEHTAPLIKQNKTITKKEHSDVRGSHL) are disordered. Positions 47–60 (MKSKRKKGSKKAAY) are enriched in basic residues. Residues 81 to 90 (TKKEHSDVRG) show a composition bias toward basic and acidic residues.

It localises to the mitochondrion. Its function is as follows. Required for respiratory growth, stability of the mitochondrial genome and for proper assembly or maintenance of mitochondrial proteins. In Saccharomyces cerevisiae (strain ATCC 204508 / S288c) (Baker's yeast), this protein is Protein PET20, mitochondrial (PET20).